The chain runs to 555 residues: Energy-dependent translational throttle protein EttA (555 aa).

2 consecutive ABC transporter domains span residues Tyr-6–Ala-259 and Leu-324–Tyr-550. Gly-39 to Ser-46 provides a ligand contact to ATP. The tract at residues Ser-95–Asn-139 is arm. Residues Gly-242–Lys-322 form a ptIM region. Gly-356–Ser-363 lines the ATP pocket.

The protein belongs to the ABC transporter superfamily. ABCF family. Translational throttle EttA subfamily. Monomer. Probably contacts ribosomal proteins L1, L5, L33 and S7, the 16S and 23S rRNA and the P-site containing tRNA(fMet).

Its subcellular location is the cytoplasm. The catalysed reaction is ATP + H2O = ADP + phosphate + H(+). Functionally, a translation factor that gates the progression of the 70S ribosomal initiation complex (IC, containing tRNA(fMet) in the P-site) into the translation elongation cycle by using a mechanism sensitive to the ATP/ADP ratio. Binds to the 70S ribosome E-site where it modulates the state of the translating ribosome during subunit translocation. ATP hydrolysis probably frees it from the ribosome, which can enter the elongation phase. The polypeptide is Energy-dependent translational throttle protein EttA (Escherichia coli O157:H7).